Here is a 228-residue protein sequence, read N- to C-terminus: MPTLILCRHGQSVWNAENLFTGWTDVDLSDQGVEEATTSGDRLKQEGIEIDVAFTSVLQRAIKTTYHLLERSNQLFVPLYKSWRLNERHYGGLQGLNKDAAREEFGEEQVHIWRRSYDIAPPDATAEQREADLADRKYQGLDERVIPTSESLKDTLERVIPYWNDAIAPELLTGKTVLVSAHGNSLRALIKHIEGVSDEDIVGYEIKTGAPLIYELDDNLGFVSKHYL.

Residues 8-15 (RHGQSVWN), 21-22 (TG), Arg-60, 87-90 (ERHY), Lys-98, 114-115 (RR), and 183-184 (GN) each bind substrate. His-9 functions as the Tele-phosphohistidine intermediate in the catalytic mechanism. Catalysis depends on Glu-87, which acts as the Proton donor/acceptor.

It belongs to the phosphoglycerate mutase family. BPG-dependent PGAM subfamily.

The enzyme catalyses (2R)-2-phosphoglycerate = (2R)-3-phosphoglycerate. Its pathway is carbohydrate degradation; glycolysis; pyruvate from D-glyceraldehyde 3-phosphate: step 3/5. In terms of biological role, catalyzes the interconversion of 2-phosphoglycerate and 3-phosphoglycerate. This is 2,3-bisphosphoglycerate-dependent phosphoglycerate mutase from Staphylococcus carnosus (strain TM300).